The primary structure comprises 640 residues: Endoglucanase 2 (640 aa).

The signal sequence occupies residues 1-34 (MARGGGAAGVSMAHHLGIALVVLVFAAMAQVARG). Aspartate 93 functions as the Nucleophile in the catalytic mechanism. Residues histidine 428, aspartate 480, and glutamate 489 contribute to the active site. Residues 512–640 (RARGRLGQSL…DVWVTGYKLV (129 aa)) constitute a propeptide, removed in mature form. Asparagine 528 carries an N-linked (GlcNAc...) asparagine glycan.

This sequence belongs to the glycosyl hydrolase 9 (cellulase E) family. In terms of tissue distribution, expressed in roots and flowers.

The protein resides in the secreted. The catalysed reaction is Endohydrolysis of (1-&gt;4)-beta-D-glucosidic linkages in cellulose, lichenin and cereal beta-D-glucans.. Its function is as follows. Hydrolyzes 1,4-beta-glycosyl linkages of 1,4-beta-glucans and 1,3-1,4-beta-glucans. Possesses broad substrate specificity for hemicelluloses of type II cell walls. Substrate preference is carboxymethyl-cellulose &gt; 1,3-1,4-beta-glucan &gt; lichenan &gt; arabinoxylan &gt; phospho-swollen cellulose &gt; xylan &gt; glucomannan. May participate in lateral root development. This chain is Endoglucanase 2 (GLU5), found in Oryza sativa subsp. japonica (Rice).